Reading from the N-terminus, the 467-residue chain is 3-isopropylmalate dehydratase large subunit (467 aa).

Cys349, Cys409, and Cys412 together coordinate [4Fe-4S] cluster. A disordered region spans residues 422–443; the sequence is PGQRSASTSNRNFEGRQGRGGR.

It belongs to the aconitase/IPM isomerase family. LeuC type 1 subfamily. In terms of assembly, heterodimer of LeuC and LeuD. [4Fe-4S] cluster serves as cofactor.

It carries out the reaction (2R,3S)-3-isopropylmalate = (2S)-2-isopropylmalate. It participates in amino-acid biosynthesis; L-leucine biosynthesis; L-leucine from 3-methyl-2-oxobutanoate: step 2/4. Catalyzes the isomerization between 2-isopropylmalate and 3-isopropylmalate, via the formation of 2-isopropylmaleate. The polypeptide is 3-isopropylmalate dehydratase large subunit (Paramagnetospirillum magneticum (strain ATCC 700264 / AMB-1) (Magnetospirillum magneticum)).